A 372-amino-acid polypeptide reads, in one-letter code: Maltose/maltodextrin import ATP-binding protein MalK (372 aa).

Residues 4–234 (VTLKNVCKAY…PQNRFVAGFI (231 aa)) form the ABC transporter domain. 36–43 (GPSGCGKS) contributes to the ATP binding site.

It belongs to the ABC transporter superfamily. Maltooligosaccharide importer (TC 3.A.1.1.1) family. In terms of assembly, the complex is composed of two ATP-binding proteins (MalK), two transmembrane proteins (MalG and MalK) and a solute-binding protein (MalE).

The protein resides in the cell inner membrane. The catalysed reaction is D-maltose(out) + ATP + H2O = D-maltose(in) + ADP + phosphate + H(+). In terms of biological role, part of the ABC transporter complex MalEFGK involved in maltose/maltodextrin import. Responsible for energy coupling to the transport system. The sequence is that of Maltose/maltodextrin import ATP-binding protein MalK from Vibrio parahaemolyticus serotype O3:K6 (strain RIMD 2210633).